The sequence spans 80 residues: Conotoxin Bt6.5 (80 aa).

Positions 1-22 are cleaved as a signal peptide; that stretch reads MKLTCVLIIAVLFLTACQLATA. Residues 23 to 45 constitute a propeptide that is removed on maturation; that stretch reads KTYSTGRQKHRALRSTDKNIKLS. Cystine bridges form between C48/C62, C55/C66, and C61/C73.

The protein belongs to the conotoxin O1 superfamily. Expressed by the venom duct.

It is found in the secreted. Its function is as follows. When injected intracranially in mice, induces a series of symptoms such as quivering, climbing, scratching, barrel rolling and paralysis of limbs. Unexpectedly, no effect is observed on ionic currents when tested on locust DUM neuron. The chain is Conotoxin Bt6.5 from Conus betulinus (Beech cone).